We begin with the raw amino-acid sequence, 519 residues long: Carboxyl-terminal-processing peptidase 3, chloroplastic (519 aa).

In terms of domain architecture, PDZ spans 186–274 (YQSFRIGSDG…IKLKNVNGSG (89 aa)). Active-site charge relay system residues include Ser-407 and Lys-432.

Belongs to the peptidase S41A family.

Its subcellular location is the plastid. It localises to the chloroplast thylakoid lumen. It catalyses the reaction The enzyme shows specific recognition of a C-terminal tripeptide, Xaa-Yaa-Zaa, in which Xaa is preferably Ala or Leu, Yaa is preferably Ala or Tyr, and Zaa is preferably Ala, but then cleaves at a variable distance from the C-terminus. A typical cleavage is -Ala-Ala-|-Arg-Ala-Ala-Lys-Glu-Asn-Tyr-Ala-Leu-Ala-Ala.. In terms of biological role, protease involved in the C-terminal processing of the chloroplastic D1 protein of photosystem II. This proteolytic processing is necessary to allow the light-driven assembly of the tetranuclear manganese cluster, which is responsible for photosynthetic water oxidation. This Arabidopsis thaliana (Mouse-ear cress) protein is Carboxyl-terminal-processing peptidase 3, chloroplastic (CTPA3).